The following is a 207-amino-acid chain: Ribosome maturation factor RimP (207 aa).

The protein belongs to the RimP family.

Its subcellular location is the cytoplasm. In terms of biological role, required for maturation of 30S ribosomal subunits. In Parvibaculum lavamentivorans (strain DS-1 / DSM 13023 / NCIMB 13966), this protein is Ribosome maturation factor RimP.